Reading from the N-terminus, the 1787-residue chain is Chromodomain-helicase-DNA-binding protein 3 homolog (1787 aa).

Disordered regions lie at residues methionine 1–tyrosine 80 and proline 170–glycine 258. The span at aspartate 10–glutamate 43 shows a compositional bias: acidic residues. Basic residues predominate over residues proline 56–lysine 71. Residues aspartate 192 to alanine 243 show a composition bias toward basic and acidic residues. 2 PHD-type zinc fingers span residues glutamine 265–histidine 312 and methionine 328–proline 375. Chromo domains follow at residues isoleucine 373–serine 476 and methionine 501–glutamate 583. Residues arginine 628–aspartate 812 enclose the Helicase ATP-binding domain. Aspartate 641–threonine 648 is an ATP binding site. The DEAH box motif lies at aspartate 763–histidine 766. Residues leucine 944–aspartate 1107 enclose the Helicase C-terminal domain. Disordered regions lie at residues glutamate 1120–glutamine 1141, threonine 1186–asparagine 1212, glutamate 1248–serine 1295, and arginine 1754–tyrosine 1787. Positions aspartate 1190 to threonine 1199 are enriched in acidic residues. Positions glutamate 1248–glutamine 1261 are enriched in polar residues. The segment covering threonine 1761–isoleucine 1773 has biased composition (basic and acidic residues).

Belongs to the SNF2/RAD54 helicase family. In terms of tissue distribution, expressed in the head and vulva.

Its subcellular location is the nucleus. The enzyme catalyses ATP + H2O = ADP + phosphate + H(+). ATP-dependent chromatin-remodeling factor that has a role in notch signaling-dependent vulval cell fate determination. May also have a role in pharyngeal precursor cell specification. The chain is Chromodomain-helicase-DNA-binding protein 3 homolog (chd-3) from Caenorhabditis elegans.